A 303-amino-acid chain; its full sequence is Biphenyl-2,3-diol 1,2-dioxygenase (303 aa).

VOC domains lie at 5-119 (SLGY…IYYG) and 143-264 (GLGH…YGWS). Residues His146, His210, and Glu260 each contribute to the Fe cation site. The segment at 283–303 (WGHKSVRDKALRATKHEQQPE) is disordered. Positions 287–303 (SVRDKALRATKHEQQPE) are enriched in basic and acidic residues.

Belongs to the extradiol ring-cleavage dioxygenase family. Homooctamer. Fe(2+) serves as cofactor.

It catalyses the reaction biphenyl-2,3-diol + O2 = 2-hydroxy-6-oxo-6-phenylhexa-2,4-dienoate + H(+). The protein operates within xenobiotic degradation; biphenyl degradation; 2-hydroxy-2,4-pentadienoate and benzoate from biphenyl: step 3/4. This chain is Biphenyl-2,3-diol 1,2-dioxygenase (bphC), found in Metapseudomonas furukawaii (Pseudomonas furukawaii).